The primary structure comprises 248 residues: 3-deoxy-manno-octulosonate cytidylyltransferase (248 aa).

It belongs to the KdsB family.

It is found in the cytoplasm. It catalyses the reaction 3-deoxy-alpha-D-manno-oct-2-ulosonate + CTP = CMP-3-deoxy-beta-D-manno-octulosonate + diphosphate. It functions in the pathway nucleotide-sugar biosynthesis; CMP-3-deoxy-D-manno-octulosonate biosynthesis; CMP-3-deoxy-D-manno-octulosonate from 3-deoxy-D-manno-octulosonate and CTP: step 1/1. The protein operates within bacterial outer membrane biogenesis; lipopolysaccharide biosynthesis. In terms of biological role, activates KDO (a required 8-carbon sugar) for incorporation into bacterial lipopolysaccharide in Gram-negative bacteria. In Escherichia coli (strain K12 / MC4100 / BW2952), this protein is 3-deoxy-manno-octulosonate cytidylyltransferase.